Consider the following 319-residue polypeptide: Cell surface A33 antigen (319 aa).

A signal peptide spans 1–21 (MLGKAGSVVWMLCAIWVAADA). Residues 22–134 (LTVETTQDIL…QDVNAKSRVR (113 aa)) enclose the Ig-like V-type domain. The Extracellular segment spans residues 22 to 235 (LTVETTQDIL…VAPRPPSMNI (214 aa)). Disulfide bonds link Cys-43-Cys-117, Cys-146-Cys-222, and Cys-162-Cys-211. 4 N-linked (GlcNAc...) asparagine glycosylation sites follow: Asn-99, Asn-112, Asn-200, and Asn-223. Positions 140–227 (PPSKPDCSIQ…GIESCNITVA (88 aa)) constitute an Ig-like C2-type domain. Residues 236 to 256 (ALYAGIAGGVFVALIIIGVIV) form a helical membrane-spanning segment. Over 257–319 (YCCCCREKDD…GRSTPDQPFQ (63 aa)) the chain is Cytoplasmic. Composition is skewed to basic and acidic residues over residues 267–276 (KDQDREDARP) and 284–308 (PKKEQKEISRGREDEDDHRHEDRWS). Residues 267–319 (KDQDREDARPNRAAYQVPKKEQKEISRGREDEDDHRHEDRWSSGRSTPDQPFQ) are disordered. Residues 309–319 (SGRSTPDQPFQ) show a composition bias toward polar residues.

Palmitoylated.

It is found in the membrane. May play a role in cell-cell recognition and signaling. This Mus musculus (Mouse) protein is Cell surface A33 antigen (Gpa33).